The following is a 57-amino-acid chain: Ribulose bisphosphate carboxylase large chain (57 aa).

A propeptide spanning residues 1 to 2 is cleaved from the precursor; it reads MS. Pro3 is modified (N-acetylproline). Lys14 carries the post-translational modification N6,N6,N6-trimethyllysine.

Belongs to the RuBisCO large chain family. Type I subfamily. In terms of assembly, heterohexadecamer of 8 large chains and 8 small chains.

The protein localises to the plastid. It localises to the chloroplast. It catalyses the reaction 2 (2R)-3-phosphoglycerate + 2 H(+) = D-ribulose 1,5-bisphosphate + CO2 + H2O. The catalysed reaction is D-ribulose 1,5-bisphosphate + O2 = 2-phosphoglycolate + (2R)-3-phosphoglycerate + 2 H(+). Its function is as follows. RuBisCO catalyzes two reactions: the carboxylation of D-ribulose 1,5-bisphosphate, the primary event in carbon dioxide fixation, as well as the oxidative fragmentation of the pentose substrate in the photorespiration process. Both reactions occur simultaneously and in competition at the same active site. This chain is Ribulose bisphosphate carboxylase large chain (rbcL), found in Camellia sinensis (Tea plant).